A 302-amino-acid chain; its full sequence is MALRLDGKQLAAELEQRLQAEIAAGLVQAGRPPGLAVVRIGDDPASGVYVANKQKACGRIGMASYLSHLPAKVPAAEVLATIQSLNLDERVDGILLQLPLPKGLDEGPLLAAIDPEKDADGLHTLNLGRLLKGEPGPRSCTPGGVMALLARHQIPLAGKRAVVIGRSILVGQPMALMLQAANATVSVAHSHTDDLASLTQQADVLVVAAGRARMIGSEHVKPGAVVVDVGIHRLPADPELGPQVKARLCGDVRAQEVEPLASALTPVPGGVGPMTVTMLLVNTVARWQQHCGLPFGLRDLLV.

Residues 165–167 (GRS), S190, and I231 each bind NADP(+).

The protein belongs to the tetrahydrofolate dehydrogenase/cyclohydrolase family. Homodimer.

It carries out the reaction (6R)-5,10-methylene-5,6,7,8-tetrahydrofolate + NADP(+) = (6R)-5,10-methenyltetrahydrofolate + NADPH. The catalysed reaction is (6R)-5,10-methenyltetrahydrofolate + H2O = (6R)-10-formyltetrahydrofolate + H(+). It functions in the pathway one-carbon metabolism; tetrahydrofolate interconversion. Its function is as follows. Catalyzes the oxidation of 5,10-methylenetetrahydrofolate to 5,10-methenyltetrahydrofolate and then the hydrolysis of 5,10-methenyltetrahydrofolate to 10-formyltetrahydrofolate. This chain is Bifunctional protein FolD, found in Prochlorococcus marinus (strain MIT 9303).